A 578-amino-acid polypeptide reads, in one-letter code: Solute carrier family 15 member 3 (578 aa).

Basic and acidic residues predominate over residues 1–15; it reads MSAPRAEEQPSRSGE. The tract at residues 1–27 is disordered; that stretch reads MSAPRAEEQPSRSGERQPLVARGPRGP. A run of 5 helical transmembrane segments spans residues 33-53, 77-97, 102-122, 155-175, and 201-221; these read TAAA…FGVT, LLFL…ADVY, LTIS…LTTI, PYCA…ASSV, and WFYW…AFIE. Asn223 carries an N-linked (GlcNAc...) asparagine glycan. Residues 232–252 traverse the membrane as a helical segment; that stretch reads IIVGLVGLAFFIFLFATPVFI. The disordered stretch occupies residues 280 to 301; it reads SRDSESAHLLPDQRSNQPGPSP. Residues 308 to 328 traverse the membrane as a helical segment; sequence FQVLVKILPVMVTLVPYWMVY. Asn353 carries an N-linked (GlcNAc...) asparagine glycan. Helical transmembrane passes span 367–387 and 405–425; these read IPEA…IPVK and LQKM…AGVL. A glycan (N-linked (GlcNAc...) asparagine) is linked at Asn436. 3 consecutive transmembrane segments (helical) span residues 462 to 481, 494 to 514, and 538 to 558; these read YLLI…EFAY, GIFF…VALL, and YFFL…WIAG.

Belongs to the major facilitator superfamily. Proton-dependent oligopeptide transporter (POT/PTR) (TC 2.A.17) family. Expressed highly in bone marrow derived macrophages, and weakly in spleen and lung. Expressed in plasmacytoid dendritic cells (pDCs) in response to toll-like receptors (TLR) stimulation.

The protein resides in the lysosome membrane. Its subcellular location is the endosome membrane. The catalysed reaction is N-acetyl-D-muramoyl-L-alanyl-D-isoglutamine(out) + n H(+)(out) = N-acetyl-D-muramoyl-L-alanyl-D-isoglutamine(in) + n H(+)(in). It catalyses the reaction glycylglycylglycine(out) + n H(+)(out) = glycylglycylglycine(in) + n H(+)(in). It carries out the reaction carnosine(out) + n H(+)(out) = carnosine(in) + n H(+)(in). The enzyme catalyses L-histidine(out) + n H(+)(out) = L-histidine(in) + n H(+)(in). Functionally, proton-coupled amino-acid transporter that transports free histidine and certain di- and tripeptides, and is involved in innate immune response. Also able to transport carnosine. Involved in the detection of microbial pathogens by toll-like receptors (TLRs) and NOD-like receptors (NLRs), probably by mediating transport of bacterial peptidoglycans across the endolysosomal membrane: catalyzes the transport of certain bacterial peptidoglycans, such as muramyl dipeptide (MDP), the NOD2 ligand. This chain is Solute carrier family 15 member 3, found in Mus musculus (Mouse).